The chain runs to 505 residues: Apolipoprotein N-acyltransferase (505 aa).

Transmembrane regions (helical) follow at residues 15 to 46, 55 to 75, 89 to 109, 129 to 149, 161 to 181, and 192 to 212; these read AAFVGVITPLAFAPYQFWPLALLSPFILLLLL, ALIAYLWGIGQFAVGISWVHV, LFLMTLLVGYLALYPSLFGWL, LWLITDWLRGWVMTGFPWLWL, FAPIGGVELITLLLLFCAGSL, and MACIPLVVYATGYGLQAMQWV. A CN hydrolase domain is found at 225–471; that stretch reads IQGNIEQGLK…TGVLKATVTP (247 aa). Glutamate 264 serves as the catalytic Proton acceptor. Lysine 330 is a catalytic residue. The Nucleophile role is filled by cysteine 382. A helical transmembrane segment spans residues 479-499; it reads FLWGTTPLYLWVGLAAGFAFW.

This sequence belongs to the CN hydrolase family. Apolipoprotein N-acyltransferase subfamily.

The protein resides in the cell inner membrane. The enzyme catalyses N-terminal S-1,2-diacyl-sn-glyceryl-L-cysteinyl-[lipoprotein] + a glycerophospholipid = N-acyl-S-1,2-diacyl-sn-glyceryl-L-cysteinyl-[lipoprotein] + a 2-acyl-sn-glycero-3-phospholipid + H(+). Its pathway is protein modification; lipoprotein biosynthesis (N-acyl transfer). Its function is as follows. Catalyzes the phospholipid dependent N-acylation of the N-terminal cysteine of apolipoprotein, the last step in lipoprotein maturation. The chain is Apolipoprotein N-acyltransferase from Vibrio cholerae serotype O1 (strain ATCC 39315 / El Tor Inaba N16961).